Reading from the N-terminus, the 349-residue chain is DNA replication and repair protein RecF (349 aa).

30-37 (GKNGSGKT) serves as a coordination point for ATP.

This sequence belongs to the RecF family.

It localises to the cytoplasm. Functionally, the RecF protein is involved in DNA metabolism; it is required for DNA replication and normal SOS inducibility. RecF binds preferentially to single-stranded, linear DNA. It also seems to bind ATP. The sequence is that of DNA replication and repair protein RecF from Francisella tularensis subsp. tularensis (strain FSC 198).